The primary structure comprises 131 residues: Large ribosomal subunit protein uL22 (131 aa).

This sequence belongs to the universal ribosomal protein uL22 family. As to quaternary structure, part of the 50S ribosomal subunit.

This protein binds specifically to 23S rRNA; its binding is stimulated by other ribosomal proteins, e.g. L4, L17, and L20. It is important during the early stages of 50S assembly. It makes multiple contacts with different domains of the 23S rRNA in the assembled 50S subunit and ribosome. Functionally, the globular domain of the protein is located near the polypeptide exit tunnel on the outside of the subunit, while an extended beta-hairpin is found that lines the wall of the exit tunnel in the center of the 70S ribosome. The protein is Large ribosomal subunit protein uL22 of Phytoplasma mali (strain AT).